Consider the following 215-residue polypeptide: MVMENKFLFLGAPGVGKGTLAKQVANTTGLFHLSTGDIFRSVMQEQGALSQTLAHYMNQGLYVPDELTNQTFWHFVTTHQNELHKGFILDGYPRTLNQLEFLQSKLQLDQVFHLKLSDPQVLVARILNRLVCPSCGSVYNKQSKPPLKANQCDRCHATLQARNDDTEAVILKRLTLYEDTVKPLIEAFTKQGILTVIEAQLPLEQQVNLVQQLVH.

Position 14-19 (14-19) interacts with ATP; sequence GVGKGT. Residues 34–63 are NMP; the sequence is STGDIFRSVMQEQGALSQTLAHYMNQGLYV. AMP-binding positions include Thr-35, Arg-40, 61–63, 91–94, and Gln-98; these read LYV and GYPR. An LID region spans residues 128 to 165; the sequence is NRLVCPSCGSVYNKQSKPPLKANQCDRCHATLQARNDD. Arg-129 contributes to the ATP binding site. The Zn(2+) site is built by Cys-132 and Cys-135. Residue 138-139 coordinates ATP; that stretch reads VY. Cys-152 and Cys-155 together coordinate Zn(2+). The AMP site is built by Arg-162 and Arg-173. ATP is bound at residue Gln-211.

It belongs to the adenylate kinase family. Monomer.

Its subcellular location is the cytoplasm. The enzyme catalyses AMP + ATP = 2 ADP. The protein operates within purine metabolism; AMP biosynthesis via salvage pathway; AMP from ADP: step 1/1. Its function is as follows. Catalyzes the reversible transfer of the terminal phosphate group between ATP and AMP. Plays an important role in cellular energy homeostasis and in adenine nucleotide metabolism. This is Adenylate kinase from Mycoplasma pneumoniae (strain ATCC 29342 / M129 / Subtype 1) (Mycoplasmoides pneumoniae).